Here is a 1059-residue protein sequence, read N- to C-terminus: Zinc finger protein 628 (1059 aa).

C2H2-type zinc fingers lie at residues 36–58, 64–86, 92–114, 120–142, 148–170, and 176–198; these read YECG…QRTH, YKCP…QRGH, YQCP…RSVH, FICG…LRQH, YPCP…RHVH, and YTCG…QRVH. Phosphothreonine is present on T199. The C2H2-type 7 zinc finger occupies 204–226; sequence FRCPLCPKTFTHSSNLLLHQRTH. Disordered regions lie at residues 226–247, 260–280, and 312–351; these read HGAA…REPG, LQPH…PVVP, and EHQP…PAAA. A compositionally biased stretch (low complexity) spans 228-237; that stretch reads AAPAPGTASA. Over residues 263-279 the composition is skewed to pro residues; sequence HSPPAPPAPPPPPPPVV. Residues 323-335 show a composition bias toward low complexity; it reads PQPQEAPAEAPKA. Residues 336-351 show a composition bias toward pro residues; that stretch reads DQPPSPLPQPPPPAAA. 7 C2H2-type zinc fingers span residues 356 to 378, 386 to 408, 454 to 476, 482 to 504, 510 to 532, 538 to 560, and 566 to 588; these read FACL…QHSH, FRCG…QQCH, YKCA…LRDH, YQCG…QRVH, FTCG…LRLH, YACG…RHVH, and HACG…QRVH. The residue at position 589 (T589) is a Phosphothreonine. 2 C2H2-type zinc fingers span residues 594–616 and 622–644; these read FRCP…QRTH and FTCP…LRTH. Positions 644–658 are enriched in low complexity; sequence HAPANTPPSTTAPAA. Positions 644 to 674 are disordered; that stretch reads HAPANTPPSTTAPAAGPQPPAPLAAARAPPA. Repeat copies occupy residues 818–831, 832–842, 843–853, and 854–864. Positions 818–864 are 4 X approximate tandem repeats; that stretch reads VQLQPLRPAPEVTTVQLQPAQEVTTVQLQPAQEVTTVQLQPAQEVTT. The interval 943 to 1059 is interaction with TAF4B; the sequence is DGEQTRLCVQ…LPAVQLVHTF (117 aa).

In terms of assembly, interacts with TAF4B.

Its subcellular location is the nucleus. Its function is as follows. Transcriptional activator. Binds DNA on GT-box consensus sequence 5'-TTGGTT-3'. Plays a role in spermiogenesis. The polypeptide is Zinc finger protein 628 (ZNF628) (Homo sapiens (Human)).